The chain runs to 474 residues: MAPAALWVALVFELQLWATGHTVPAQVVLTPYKPEPGYECQISQEYYDRKAQMCCAKCPPGQYVKHFCNKTSDTVCADCEASMYTQVWNQFRTCLSCSSSCTTDQVEIRACTKQQNRVCACEAGRYCALKTHSGSCRQCMRLSKCGPGFGVASSRAPNGNVLCKACAPGTFSDTTSSTDVCRPHRICSILAIPGNASTDAVCAPESPTLSAIPRTLYVSQPEPTRSQPLDQEPGPSQTPSILTSLGSTPIIEQSTKGGISLPIGLIVGVTSLGLLMLGLVNCIILVQRKKKPSCLQRDAKVPHVPDEKSQDAVGLEQQHLLTTAPSSSSSSLESSASAGDRRAPPGGHPQARVMAEAQGFQEARASSRISDSSHGSHGTHVNVTCIVNVCSSSDHSSQCSSQASATVGDPDAKPSASPKDEQVPFSQEECPSQSPCETTETLQSHEKPLPLGVPDMGMKPSQAGWFDQIAVKVA.

The N-terminal stretch at 1-22 (MAPAALWVALVFELQLWATGHT) is a signal peptide. Residues 23-258 (VPAQVVLTPY…PIIEQSTKGG (236 aa)) lie on the Extracellular side of the membrane. An O-linked (GalNAc...) threonine glycan is attached at T30. TNFR-Cys repeat units lie at residues 39-77 (ECQI…TVCA), 78-119 (DCEA…NRVC), 120-164 (ACEA…VLCK), and 165-203 (ACAP…AVCA). Cystine bridges form between C40-C54, C55-C68, C58-C76, C79-C94, C97-C111, C101-C119, C121-C127, C136-C145, C139-C163, and C166-C181. The N-linked (GlcNAc...) asparagine glycan is linked to N69. Residue N195 is glycosylated (N-linked (GlcNAc...) asparagine). O-linked (GalNAc...) threonine glycosylation is found at T208 and T224. The segment at 220-243 (QPEPTRSQPLDQEPGPSQTPSILT) is disordered. A helical transmembrane segment spans residues 259 to 288 (ISLPIGLIVGVTSLGLLMLGLVNCIILVQR). Residues 289–474 (KKKPSCLQRD…WFDQIAVKVA (186 aa)) lie on the Cytoplasmic side of the membrane. 3 disordered regions span residues 295 to 314 (LQRD…DAVG), 321 to 378 (LTTA…GSHG), and 397 to 463 (SQCS…PSQA). The span at 297–310 (RDAKVPHVPDEKSQ) shows a compositional bias: basic and acidic residues. Composition is skewed to low complexity over residues 324–338 (APSS…SASA) and 363–378 (ARAS…GSHG). S331 carries the post-translational modification Phosphoserine. Polar residues predominate over residues 429–442 (ECPSQSPCETTETL).

Binds to TRAF2. Interacts with BMX. Interacts (activated form) with XPNPEP3.

The protein resides in the membrane. Functionally, receptor with high affinity for TNFSF2/TNF-alpha and approximately 5-fold lower affinity for homotrimeric TNFSF1/lymphotoxin-alpha. The TRAF1/TRAF2 complex recruits the apoptotic suppressors BIRC2 and BIRC3 to TNFRSF1B/TNFR2. The chain is Tumor necrosis factor receptor superfamily member 1B (Tnfrsf1b) from Mus musculus (Mouse).